The primary structure comprises 260 residues: Electron transfer flavoprotein subunit beta (260 aa).

Belongs to the ETF beta-subunit/FixA family. Heterodimer of an alpha and a beta subunit. FAD serves as cofactor. Requires AMP as cofactor.

Functionally, the electron transfer flavoprotein serves as a specific electron acceptor for other dehydrogenases. It transfers the electrons to the main respiratory chain via ETF-ubiquinone oxidoreductase (ETF dehydrogenase). In Thermoanaerobacterium thermosaccharolyticum (strain ATCC 7956 / DSM 571 / NCIMB 9385 / NCA 3814 / NCTC 13789 / WDCM 00135 / 2032) (Clostridium thermosaccharolyticum), this protein is Electron transfer flavoprotein subunit beta (etfB).